Here is a 96-residue protein sequence, read N- to C-terminus: Large ribosomal subunit protein bL25 (96 aa).

It belongs to the bacterial ribosomal protein bL25 family. As to quaternary structure, part of the 50S ribosomal subunit; part of the 5S rRNA/L5/L18/L25 subcomplex. Contacts the 5S rRNA. Binds to the 5S rRNA independently of L5 and L18.

This is one of the proteins that binds to the 5S RNA in the ribosome where it forms part of the central protuberance. This Francisella tularensis subsp. holarctica (strain FTNF002-00 / FTA) protein is Large ribosomal subunit protein bL25.